We begin with the raw amino-acid sequence, 126 residues long: Methylglyoxal synthase (126 aa).

One can recognise an MGS-like domain in the interval 1 to 126 (MEKKIALIAH…LIKGFEGLNT (126 aa)). Residues His10, Lys14, 36-39 (TGTT), and 56-57 (SG) contribute to the substrate site. Asp62 (proton donor/acceptor) is an active-site residue. His89 contributes to the substrate binding site.

This sequence belongs to the methylglyoxal synthase family.

The catalysed reaction is dihydroxyacetone phosphate = methylglyoxal + phosphate. Functionally, catalyzes the formation of methylglyoxal from dihydroxyacetone phosphate. The sequence is that of Methylglyoxal synthase from Borrelia garinii subsp. bavariensis (strain ATCC BAA-2496 / DSM 23469 / PBi) (Borreliella bavariensis).